The following is a 277-amino-acid chain: Ribosomal RNA small subunit methyltransferase G (277 aa).

Residues glycine 128, phenylalanine 133, 188–189 (SE), and arginine 198 each bind S-adenosyl-L-methionine.

It belongs to the methyltransferase superfamily. RNA methyltransferase RsmG family.

The protein localises to the cytoplasm. The catalysed reaction is guanosine(527) in 16S rRNA + S-adenosyl-L-methionine = N(7)-methylguanosine(527) in 16S rRNA + S-adenosyl-L-homocysteine. Its function is as follows. Specifically methylates the N7 position of guanine in position 527 of 16S rRNA. The sequence is that of Ribosomal RNA small subunit methyltransferase G from Nitrobacter winogradskyi (strain ATCC 25391 / DSM 10237 / CIP 104748 / NCIMB 11846 / Nb-255).